Reading from the N-terminus, the 373-residue chain is Glutamate 5-kinase (373 aa).

Residue Lys-15 participates in ATP binding. Positions 55, 142, and 154 each coordinate substrate. ATP contacts are provided by residues 174–175 (TD) and 216–222 (TGGMATK). In terms of domain architecture, PUA spans 281–359 (AGSIVVDAGA…SEIEGILGFR (79 aa)).

The protein belongs to the glutamate 5-kinase family.

It localises to the cytoplasm. It catalyses the reaction L-glutamate + ATP = L-glutamyl 5-phosphate + ADP. It functions in the pathway amino-acid biosynthesis; L-proline biosynthesis; L-glutamate 5-semialdehyde from L-glutamate: step 1/2. In terms of biological role, catalyzes the transfer of a phosphate group to glutamate to form L-glutamate 5-phosphate. The chain is Glutamate 5-kinase from Citrifermentans bemidjiense (strain ATCC BAA-1014 / DSM 16622 / JCM 12645 / Bem) (Geobacter bemidjiensis).